Consider the following 361-residue polypeptide: Basic helix-loop-helix protein 79 (361 aa).

The interval 66–159 (APEASNGSGS…ASTVTAGQKT (94 aa)) is disordered. Residues 124–138 (GRPERARPGAKKKAE) are compositionally biased toward basic and acidic residues. Polar residues predominate over residues 146-157 (PATSASTVTAGQ). The Nuclear localization signal motif lies at 166-173 (ARRGQATD). The segment at 170–183 (QATDSHSLAERVRR) is basic motif; degenerate. The bHLH domain maps to 170–220 (QATDSHSLAERVRRERISERMRYLQELVPGCNKVTGKAGMLDEIINYVQSL). A helix-loop-helix motif region spans residues 184 to 220 (ERISERMRYLQELVPGCNKVTGKAGMLDEIINYVQSL).

The protein belongs to the bHLH protein family. Homodimer. Interacts with IBH1.

Its subcellular location is the nucleus. Together with BCL1, positive regulator of cell elongation at least partially through increased gibberellic acid (GA) biosynthesis. The protein is Basic helix-loop-helix protein 79 of Oryza sativa subsp. indica (Rice).